Here is a 257-residue protein sequence, read N- to C-terminus: MGRSPCCEKAHMNKGAWTKEEDQLLVDYIRKHGEGCWRSLPRAAGLQRCGKSCRLRWMNYLRPDLKRGNFTEEEDELIIKLHSLLGNKWSLIAGRLPGRTDNEIKNYWNTHIKRKLLSRGIDPNSHRLINESVVSPSSLQNDVVETIHLDFSGPVKPEPVREEIGMVNNCESSGTTSEKDYGNEEDWVLNLELSVGPSYRYESTRKVSVVDSAESTRRWGSELFGAHESDAVCLCCRIGLFRNESCRNCRVSDVRTH.

HTH myb-type domains follow at residues 9 to 61 (KAHM…MNYL) and 62 to 116 (RPDL…KRKL). 2 DNA-binding regions (H-T-H motif) span residues 37–61 (WRSL…MNYL) and 89–112 (WSLI…NTHI). Residues 189–193 (LNLEL) carry the Required for interaction with CPL1 motif.

As to quaternary structure, interacts with CPL1. Expressed in roots, stems, leaves, flowers and siliques.

The protein localises to the nucleus. The sequence is that of Transcription factor MYB3 (MYB3) from Arabidopsis thaliana (Mouse-ear cress).